Reading from the N-terminus, the 236-residue chain is Thylakoid lumenal 17.4 kDa protein, chloroplastic (236 aa).

Pentapeptide repeat domains are found at residues 124–163 (TNLK…SFKG) and 169–208 (AVID…VFED).

In terms of assembly, interacts in vitro with LTO1.

The protein resides in the plastid. The protein localises to the chloroplast thylakoid lumen. In Arabidopsis thaliana (Mouse-ear cress), this protein is Thylakoid lumenal 17.4 kDa protein, chloroplastic.